Here is a 404-residue protein sequence, read N- to C-terminus: Argininosuccinate synthase (404 aa).

ATP is bound at residue Ala9 to Ser17. L-citrulline is bound at residue Tyr86. Gly116 lines the ATP pocket. Thr118, Asn122, and Asp123 together coordinate L-aspartate. Asn122 provides a ligand contact to L-citrulline. The L-citrulline site is built by Arg126, Ser174, Ser183, Glu259, and Tyr271.

The protein belongs to the argininosuccinate synthase family. Type 1 subfamily. Homotetramer.

The protein resides in the cytoplasm. It catalyses the reaction L-citrulline + L-aspartate + ATP = 2-(N(omega)-L-arginino)succinate + AMP + diphosphate + H(+). It functions in the pathway amino-acid biosynthesis; L-arginine biosynthesis; L-arginine from L-ornithine and carbamoyl phosphate: step 2/3. The protein is Argininosuccinate synthase of Listeria monocytogenes serovar 1/2a (strain ATCC BAA-679 / EGD-e).